Reading from the N-terminus, the 123-residue chain is Potassium voltage-gated channel subfamily E member 2 (123 aa).

Residues Asn-6 and Asn-29 are each glycosylated (N-linked (GlcNAc...) asparagine). A helical membrane pass occupies residues 49–69 (VILYLMVMIGMFAFIVVAILV). Residues 70–123 (STVKSKRREHSQDPYHQYIVEDWQQKYRSQILHLEDSKATIHENLGATGFTVSP) are Cytoplasmic-facing.

The protein belongs to the potassium channel KCNE family. Interacts with KCNB1. Associates with KCNH2/ERG1. May associate with KCNQ2 and KCNQ3. Associates with HCN1 and probably HCN2. Heteromultimer with KCNC2. Interacts with KCNC2. Interacts with KCNQ1; forms a heterooligomer complex that targets to the membrane raft and leading to currents with an apparently instantaneous activation, a rapid deactivation process and a linear current-voltage relationship and decreases the amplitude of the outward current.

It localises to the cell membrane. It is found in the apical cell membrane. Functionally, ancillary protein that functions as a regulatory subunit of the voltage-gated potassium (Kv) channel complex composed of pore-forming and potassium-conducting alpha subunits and of regulatory beta subunits. KCNE2 beta subunit modulates the gating kinetics and enhances stability of the channel complex. Alters the gating of the delayed rectifier Kv channel containing KCNB1 alpha subunit. Associates with KCNH2/HERG alpha subunit Kv channel to form the rapidly activating component of the delayed rectifying potassium current (IKr) in heart. May associate with KCNQ2 and/or KCNQ3 alpha subunits to modulate the native M-type current. May associate with HCN1 and HCN2 channel subunits to increase potassium current. Forms a heterooligomer complex with KCNQ1/KVLQT1 alpha subunits which leads to currents with an apparently instantaneous activation, a rapid deactivation process and a linear current-voltage relationship and decreases the amplitude of the outward current. KCNQ1-KCNE2 channel associates with Na(+)-coupled myo-inositol symporter in the apical membrane of choroid plexus epithelium and regulates the myo-inositol gradient between blood and cerebrospinal fluid with an impact on neuron excitability. The sequence is that of Potassium voltage-gated channel subfamily E member 2 (Kcne2) from Cavia porcellus (Guinea pig).